The chain runs to 169 residues: Probable inosine/xanthosine triphosphatase (169 aa).

Substrate is bound at residue 7 to 12 (STNKAK). Glu35 contacts Mg(2+).

The protein belongs to the YjjX NTPase family. Homodimer. It depends on Mg(2+) as a cofactor. Requires Mn(2+) as cofactor.

The enzyme catalyses XTP + H2O = XDP + phosphate + H(+). The catalysed reaction is ITP + H2O = IDP + phosphate + H(+). In terms of biological role, phosphatase that hydrolyzes non-canonical purine nucleotides such as XTP and ITP to their respective diphosphate derivatives. Probably excludes non-canonical purines from DNA/RNA precursor pool, thus preventing their incorporation into DNA/RNA and avoiding chromosomal lesions. The protein is Probable inosine/xanthosine triphosphatase of Sulfurisphaera tokodaii (strain DSM 16993 / JCM 10545 / NBRC 100140 / 7) (Sulfolobus tokodaii).